A 574-amino-acid chain; its full sequence is Tyrosinase (574 aa).

Cu cation contacts are provided by His-67, His-95, His-104, His-275, His-279, and His-304. Residues 93-95 constitute a cross-link (2'-(S-cysteinyl)-histidine (Cys-His)); sequence CTH.

Belongs to the tyrosinase family. The cofactor is Cu(2+).

It catalyses the reaction 2 L-dopa + O2 = 2 L-dopaquinone + 2 H2O. The enzyme catalyses L-tyrosine + O2 = L-dopaquinone + H2O. Functionally, this is a copper-containing oxidase that functions in the formation of pigments such as melanins and other polyphenolic compounds. The sequence is that of Tyrosinase (TYR) from Podospora anserina (Pleurage anserina).